The primary structure comprises 68 residues: Metallothionein-3 (68 aa).

An N-acetylmethionine modification is found at methionine 1. Residues 1–30 are beta; it reads MDPETCPCPTGGSCTCSDPCKCEGCTCASS. A divalent metal cation is bound by residues cysteine 6, cysteine 8, cysteine 14, cysteine 16, cysteine 20, cysteine 22, cysteine 25, and cysteine 27. The segment at 31–68 is alpha; the sequence is KKSCCSCCPAECEKCAKDCVCKGGEGAEAEEKKCSCCQ. The residue at position 33 (serine 33) is a Phosphoserine. A divalent metal cation-binding residues include cysteine 34, cysteine 35, cysteine 37, cysteine 38, cysteine 42, cysteine 45, cysteine 49, cysteine 51, cysteine 64, cysteine 66, and cysteine 67.

This sequence belongs to the metallothionein superfamily. Type 1 family.

In terms of biological role, binds heavy metals. Contains five zinc and one copper atoms per polypeptide chain and only a negligible amount of cadmium. In Bos mutus grunniens (Wild yak), this protein is Metallothionein-3 (MT3).